A 175-amino-acid chain; its full sequence is Large ribosomal subunit protein uL18 (175 aa).

This sequence belongs to the universal ribosomal protein uL18 family. In terms of assembly, part of the 50S ribosomal subunit. Contacts the 5S and 23S rRNAs.

This is one of the proteins that bind and probably mediate the attachment of the 5S RNA into the large ribosomal subunit, where it forms part of the central protuberance. This is Large ribosomal subunit protein uL18 from Methanosphaerula palustris (strain ATCC BAA-1556 / DSM 19958 / E1-9c).